We begin with the raw amino-acid sequence, 230 residues long: Octanoyltransferase (230 aa).

Positions 38–215 (AGGADTLLLL…AVCAALDGVL (178 aa)) constitute a BPL/LPL catalytic domain. Substrate contacts are provided by residues 76-83 (RGGKITWH), 145-147 (AIG), and 158-160 (GFA). The Acyl-thioester intermediate role is filled by C176.

Belongs to the LipB family.

It localises to the cytoplasm. The catalysed reaction is octanoyl-[ACP] + L-lysyl-[protein] = N(6)-octanoyl-L-lysyl-[protein] + holo-[ACP] + H(+). The protein operates within protein modification; protein lipoylation via endogenous pathway; protein N(6)-(lipoyl)lysine from octanoyl-[acyl-carrier-protein]: step 1/2. Its function is as follows. Catalyzes the transfer of endogenously produced octanoic acid from octanoyl-acyl-carrier-protein onto the lipoyl domains of lipoate-dependent enzymes. Lipoyl-ACP can also act as a substrate although octanoyl-ACP is likely to be the physiological substrate. The chain is Octanoyltransferase from Mycobacterium tuberculosis (strain ATCC 25177 / H37Ra).